Consider the following 148-residue polypeptide: Lysozyme C (148 aa).

An N-terminal signal peptide occupies residues 1 to 18; the sequence is MKAPLLLGLLLLSVTVQG. The region spanning 19 to 148 is the C-type lysozyme domain; sequence KVFERCDLAR…VSQYVRNCGV (130 aa). 4 cysteine pairs are disulfide-bonded: Cys24-Cys146, Cys48-Cys134, Cys83-Cys99, and Cys95-Cys113. Active-site residues include Glu53 and Asp71.

The protein belongs to the glycosyl hydrolase 22 family. In terms of assembly, monomer.

Its subcellular location is the secreted. It catalyses the reaction Hydrolysis of (1-&gt;4)-beta-linkages between N-acetylmuramic acid and N-acetyl-D-glucosamine residues in a peptidoglycan and between N-acetyl-D-glucosamine residues in chitodextrins.. Functionally, lysozymes have primarily a bacteriolytic function; those in tissues and body fluids are associated with the monocyte-macrophage system and enhance the activity of immunoagents. In Leptonychotes weddellii (Weddell seal), this protein is Lysozyme C (LYZ).